Reading from the N-terminus, the 334-residue chain is GTPase Obg (334 aa).

One can recognise an Obg domain in the interval 1 to 159; the sequence is MKFVDSASVR…REIGLELSVM (159 aa). The region spanning 160 to 332 is the OBG-type G domain; it reads ADIGLLGIPN…LVAGLFKLVL (173 aa). GTP-binding positions include 166–173, 191–195, 212–215, 282–285, and 313–315; these read GIPNAGKS, FTTLH, DIPG, NKID, and SAL. Positions 173 and 193 each coordinate Mg(2+).

This sequence belongs to the TRAFAC class OBG-HflX-like GTPase superfamily. OBG GTPase family. In terms of assembly, monomer. Mg(2+) is required as a cofactor.

Its subcellular location is the cytoplasm. An essential GTPase which binds GTP, GDP and possibly (p)ppGpp with moderate affinity, with high nucleotide exchange rates and a fairly low GTP hydrolysis rate. Plays a role in control of the cell cycle, stress response, ribosome biogenesis and in those bacteria that undergo differentiation, in morphogenesis control. This is GTPase Obg from Vesicomyosocius okutanii subsp. Calyptogena okutanii (strain HA).